A 70-amino-acid polypeptide reads, in one-letter code: Mu-agatoxin-Ao1b (70 aa).

The N-terminal stretch at 1–20 is a signal peptide; that stretch reads MKAIIFFCFLSVMVFIVAEA. A propeptide spanning residues 21-33 is cleaved from the precursor; sequence SSLEALKIFEGER. Disulfide bonds link C35–C50, C42–C55, C49–C65, and C57–C63. N69 carries the asparagine amide modification.

The protein belongs to the neurotoxin 07 (Beta/delta-agtx) family. 04 (aga-5) subfamily. In terms of tissue distribution, expressed by the venom gland.

It is found in the secreted. Insecticidal neurotoxin that modulates the insect Nav channel (DmNaV1/tipE (para/tipE)) in a unique manner, with both the activation and inactivation processes being affected. The voltage dependence of activation is shifted toward more hyperpolarized potentials (analogous to site 4 toxins) and a non-inactivating persistent sodium current is induced (site 3-like action). Interestingly, both effects take place in a voltage-dependent manner, producing a bell-shaped curve between -80 and 0 mV. The protein is Mu-agatoxin-Ao1b of Agelena orientalis (Funnel-web spider).